Here is a 311-residue protein sequence, read N- to C-terminus: MAEASPHPGRYFCHCCSVEIVPRLPDYICPRCESGFIEELPEETRSTENGSAPSTAPTDQSRPPLEHVDQHLFTLPQGYGQFAFGIFDDSFEIPTFPPGAQADDGRDPESRRERDHPSRHRYGARQPRARLTTRRATGRHEGVPTLEGIIQQLVNGIITPATIPSLGPWGVLHSNPMDYAWGANGLDAIITQLLNQFENTGPPPADKEKIQALPTVPVTEEHVGSGLECPVCKDDYALGERVRQLPCNHLFHDGCIVPWLEQHDSCPVCRKSLTGQNTATNPPGLTGVSFSSSSSSSSSSSPSNENATSNS.

At alanine 2 the chain carries N-acetylalanine. A Phosphoserine modification is found at serine 5. Residues 5-100 form a required for interaction with BAG6 region; that stretch reads SPHPGRYFCH…FEIPTFPPGA (96 aa). Residues cysteine 13, cysteine 16, cysteine 29, and cysteine 32 each contribute to the Zn(2+) site. A C4-type zinc finger spans residues 13-32; the sequence is CHCCSVEIVPRLPDYICPRC. Disordered stretches follow at residues 42-64 and 94-132; these read EETR…SRPP and PTFP…ARLT. Residues 47–61 show a composition bias toward polar residues; that stretch reads TENGSAPSTAPTDQS. Residues 103–116 are compositionally biased toward basic and acidic residues; it reads DDGRDPESRRERDH. Residues 117–132 show a composition bias toward basic residues; sequence PSRHRYGARQPRARLT. A sufficient for interaction with AICDA region spans residues 200–304; sequence TGPPPADKEK…SSSSSSSPSN (105 aa). Residues 229–270 form an RING-type zinc finger; that stretch reads CPVCKDDYALGERVRQLPCNHLFHDGCIVPWLEQHDSCPVCR. Residues 277–311 form a disordered region; that stretch reads NTATNPPGLTGVSFSSSSSSSSSSSPSNENATSNS. Residues 289–311 are compositionally biased toward low complexity; sequence SFSSSSSSSSSSSPSNENATSNS.

As to quaternary structure, interacts with CCDC50, EGFR, FLT3 and SCAMP3. Interacts with BAG6 (via ubiquitin-like domain); required for BAG6-dependent ubiquitination of proteins mislocalized to the cytosol. Interacts with CDKN1A. Interacts with AICDA. Ubiquitinated. May undergo autoubiquitination. As to expression, highly expressed in liver and testis.

It is found in the cytoplasm. Its subcellular location is the nucleus. It catalyses the reaction S-ubiquitinyl-[E2 ubiquitin-conjugating enzyme]-L-cysteine + [acceptor protein]-L-lysine = [E2 ubiquitin-conjugating enzyme]-L-cysteine + N(6)-ubiquitinyl-[acceptor protein]-L-lysine.. It functions in the pathway protein modification; protein ubiquitination. In terms of biological role, E3 ubiquitin-protein ligase that mediates ubiquitination oF target proteins. Depending on the associated E2 ligase, mediates 'Lys-27'-, 'Lys-29'-, 'Lys-48'- and/or 'Lys-63'-linked polyubiquitination of substrates. Part of a BAG6-dependent quality control process ensuring that proteins of the secretory pathway that are mislocalized to the cytosol are degraded by the proteasome. Probably acts by providing the ubiquitin ligase activity associated with the BAG6 complex and be responsible for ubiquitination of the hydrophobic mislocalized proteins and their targeting to the proteasome. May also play a role in the endosomal recycling of IGF2R, the cation-independent mannose-6-phosphate receptor. May play a role in the endosomal sorting and degradation of several membrane receptors including EGFR, FLT3, MET and CXCR4, by mediating their ubiquitination. By ubiquitinating CDKN1A/p21 and targeting it for degradation, may also promote cell proliferation. May monoubiquitinate AICDA. Acts as a regulator of DNA repair by mediating 'Lys-27'- and 'Lys-29'-linked polyubiquitination of MRE11, thereby promoting the exonuclease activity of MRE11. The sequence is that of E3 ubiquitin-protein ligase RNF126 from Homo sapiens (Human).